The primary structure comprises 435 residues: Virulence factor PIT1 (435 aa).

Helical transmembrane passes span 33–53 (ETTT…SEVI), 77–97 (IFFI…ILVT), 111–131 (WAWT…CVIG), 143–163 (VASW…MWTN), and 204–224 (TFWF…ACCI). Asn-330 carries an N-linked (GlcNAc...) asparagine glycan. The span at 392 to 404 (SPQMPSKAQSQSI) shows a compositional bias: polar residues. Residues 392–435 (SPQMPSKAQSQSIPYKREVEVTVDMSPVPPPPGPSPAPLPAPYM) are disordered. Positions 418–435 (PVPPPPGPSPAPLPAPYM) are enriched in pro residues.

O-mannosylated by PMT4. Is also N-glycosylated.

It localises to the cell membrane. In terms of biological role, plasma membrane virulence factor required for spreading and inducing tumors in infected leaves. This Mycosarcoma maydis (Corn smut fungus) protein is Virulence factor PIT1.